A 218-amino-acid polypeptide reads, in one-letter code: Protein-methionine-sulfoxide reductase heme-binding subunit MsrQ (218 aa).

5 consecutive transmembrane segments (helical) span residues 14-34 (AVHAAVLAPIALLGWQFWQVW), 60-80 (LLLITLAITPLRQLTGQAVLI), 86-106 (LGLYTFFYASVHLTAYLWLDL), 121-141 (PYITVGFTAWLLLVPLAITST), and 155-175 (LHMLIYPIGLLAVLHFWWLVK).

This sequence belongs to the MsrQ family. As to quaternary structure, heterodimer of a catalytic subunit (MsrP) and a heme-binding subunit (MsrQ). It depends on FMN as a cofactor. Heme b serves as cofactor.

It localises to the cell inner membrane. Its function is as follows. Part of the MsrPQ system that repairs oxidized periplasmic proteins containing methionine sulfoxide residues (Met-O), using respiratory chain electrons. Thus protects these proteins from oxidative-stress damage caused by reactive species of oxygen and chlorine generated by the host defense mechanisms. MsrPQ is essential for the maintenance of envelope integrity under bleach stress, rescuing a wide series of structurally unrelated periplasmic proteins from methionine oxidation. MsrQ provides electrons for reduction to the reductase catalytic subunit MsrP, using the quinone pool of the respiratory chain. The protein is Protein-methionine-sulfoxide reductase heme-binding subunit MsrQ of Xanthomonas campestris pv. campestris (strain B100).